The sequence spans 167 residues: Translationally-controlled tumor protein homolog (167 aa).

The 167-residue stretch at 1 to 167 (MIIYTDIISG…WKHGVKAEKI (167 aa)) folds into the TCTP domain.

It belongs to the TCTP family.

Its subcellular location is the cytoplasm. The protein localises to the cytoskeleton. Involved in protein synthesis. Involved in microtubule stabilization. This is Translationally-controlled tumor protein homolog from Kluyveromyces lactis (strain ATCC 8585 / CBS 2359 / DSM 70799 / NBRC 1267 / NRRL Y-1140 / WM37) (Yeast).